The chain runs to 362 residues: 3-dehydroquinate synthase (362 aa).

NAD(+)-binding positions include 74–79 (DGEGYK), 108–112 (GVIGD), 132–133 (TT), Lys145, Lys154, and 172–175 (TLDT). Zn(2+) contacts are provided by Glu187, His250, and His267.

Belongs to the sugar phosphate cyclases superfamily. Dehydroquinate synthase family. Co(2+) is required as a cofactor. The cofactor is Zn(2+). Requires NAD(+) as cofactor.

Its subcellular location is the cytoplasm. The enzyme catalyses 7-phospho-2-dehydro-3-deoxy-D-arabino-heptonate = 3-dehydroquinate + phosphate. Its pathway is metabolic intermediate biosynthesis; chorismate biosynthesis; chorismate from D-erythrose 4-phosphate and phosphoenolpyruvate: step 2/7. Functionally, catalyzes the conversion of 3-deoxy-D-arabino-heptulosonate 7-phosphate (DAHP) to dehydroquinate (DHQ). The protein is 3-dehydroquinate synthase of Citrifermentans bemidjiense (strain ATCC BAA-1014 / DSM 16622 / JCM 12645 / Bem) (Geobacter bemidjiensis).